The sequence spans 455 residues: Probable carboxypeptidase MCYG_07204 (455 aa).

Residues 1-21 form the signal peptide; the sequence is MQKTYLLALLVSSLASVRSLA. Asn93 carries N-linked (GlcNAc...) asparagine glycosylation. Asp170 is a Zn(2+) binding site. The active-site Proton acceptor is the Glu202. Glu203 serves as a coordination point for Zn(2+). Asn390 carries an N-linked (GlcNAc...) asparagine glycan.

It belongs to the peptidase M20A family. The cofactor is Zn(2+).

The protein resides in the secreted. The sequence is that of Probable carboxypeptidase MCYG_07204 from Arthroderma otae (strain ATCC MYA-4605 / CBS 113480) (Microsporum canis).